Here is a 64-residue protein sequence, read N- to C-terminus: MPKMKTHRGAAKRFKKTGTGKIKRSKAYTSHILTKKSPKRKRKLRKAGIVFKGDQRRIAQLLPY.

Composition is skewed to basic residues over residues 1–26 (MPKM…KRSK) and 33–44 (LTKKSPKRKRKL). The tract at residues 1–44 (MPKMKTHRGAAKRFKKTGTGKIKRSKAYTSHILTKKSPKRKRKL) is disordered.

The protein belongs to the bacterial ribosomal protein bL35 family.

The sequence is that of Large ribosomal subunit protein bL35 from Alkaliphilus oremlandii (strain OhILAs) (Clostridium oremlandii (strain OhILAs)).